The following is a 270-amino-acid chain: Interleukin-1 beta (270 aa).

A propeptide spanning residues 1 to 118 is cleaved from the precursor; it reads MATVPEPTSE…VYDDDAFVCD (118 aa).

The protein belongs to the IL-1 family. As to quaternary structure, monomer. In its precursor form, weakly interacts with full-length MEFV; the mature cytokine does not interact at all. Interacts with integrins ITGAV:ITGBV and ITGA5:ITGB1; integrin-binding is required for IL1B signaling. Interacts with cargo receptor TMED10; the interaction is direct and is required for the secretion of IL1B mature form. Interacts with HSP90AB1; the interaction facilitates cargo translocation into the ERGIC. Interacts with HSP90B1; the interaction facilitates cargo translocation into the ERGIC.

The protein localises to the cytoplasm. It is found in the cytosol. It localises to the secreted. The protein resides in the lysosome. Its subcellular location is the extracellular exosome. Functionally, potent pro-inflammatory cytokine. Initially discovered as the major endogenous pyrogen, induces prostaglandin synthesis, neutrophil influx and activation, T-cell activation and cytokine production, B-cell activation and antibody production, and fibroblast proliferation and collagen production. Promotes Th17 differentiation of T-cells. Synergizes with IL12/interleukin-12 to induce IFNG synthesis from T-helper 1 (Th1) cells. Plays a role in angiogenesis by inducing VEGF production synergistically with TNF and IL6. Involved in transduction of inflammation downstream of pyroptosis: its mature form is specifically released in the extracellular milieu by passing through the gasdermin-D (GSDMD) pore. This chain is Interleukin-1 beta (IL1B), found in Eumetopias jubatus (Steller sea lion).